Here is a 347-residue protein sequence, read N- to C-terminus: MSLLCRNKGCGQHFDPNTNLPDSCCHHPGVPIFHDALKGWSCCRKRTVDFSEFLNIKGCTMGPHCAEKLPEAPQPEGPATSSSLQEQKPLNVIPKSAETLRRERPKSELPLKLLPLNISQALEMALEQKELDQEPGAGLDSLIRTGSSCQNPGCDAVYQGPESDATPCTYHPGAPRFHEGMKSWSCCGIQTLDFGAFLAQPGCRVGRHDWGKQLPASCRHDWHQTDSLVVVTVYGQIPLPAFNWVKASQTELHVHIVFDGNRVFQAQMKLWGVINVEQSSVFLMPSRVEISLVKADPGSWAQLEHPDALAKKARAGVVLEMDEEESDDSDDDLSWTEEEEEEEAMGE.

The Zn(2+) site is built by C5, C10, C24, and H27. The region spanning C5–H64 is the CHORD 1 domain. Residues P28–P31 carry the SH3-binding motif. C42, C43, C59, and H64 together coordinate Zn(2+). The SH3-binding signature appears at P70–P78. Residues C149 and C154 each contribute to the Zn(2+) site. The region spanning C149–H208 is the CHORD 2 domain. Residues Y158–P161 carry the SH2-binding motif. C168 and H171 together coordinate Zn(2+). An SH3-binding motif is present at residues P172 to P175. Zn(2+) contacts are provided by C186, C187, C203, and H208. The CS domain maps to P215–E304. Positions Y234–I237 match the SH2-binding motif. The tract at residues L319–E347 is disordered. The segment covering E320–E347 has biased composition (acidic residues).

In terms of assembly, interacts with beta-1 integrin subunit. This interaction is regulated by divalent cations, and it occurs only in absence of calcium. As to expression, expressed in skeletal and cardiac muscles but not in other tissues.

Its function is as follows. May play a role during maturation and/or organization of muscles cells. This Homo sapiens (Human) protein is Integrin beta-1-binding protein 2 (ITGB1BP2).